Consider the following 122-residue polypeptide: Small ribosomal subunit protein uS13 (122 aa).

The segment at 93–122 is disordered; it reads RLSLPVRGQRTKTNSRTRKGKRKTVAGKKK. Residues 101-122 are compositionally biased toward basic residues; it reads QRTKTNSRTRKGKRKTVAGKKK.

It belongs to the universal ribosomal protein uS13 family. Part of the 30S ribosomal subunit. Forms a loose heterodimer with protein S19. Forms two bridges to the 50S subunit in the 70S ribosome.

Located at the top of the head of the 30S subunit, it contacts several helices of the 16S rRNA. In the 70S ribosome it contacts the 23S rRNA (bridge B1a) and protein L5 of the 50S subunit (bridge B1b), connecting the 2 subunits; these bridges are implicated in subunit movement. Contacts the tRNAs in the A and P-sites. This Chlamydia caviae (strain ATCC VR-813 / DSM 19441 / 03DC25 / GPIC) (Chlamydophila caviae) protein is Small ribosomal subunit protein uS13.